A 132-amino-acid polypeptide reads, in one-letter code: Small ribosomal subunit protein uS8 (132 aa).

Belongs to the universal ribosomal protein uS8 family. As to quaternary structure, part of the 30S ribosomal subunit. Contacts proteins S5 and S12.

Functionally, one of the primary rRNA binding proteins, it binds directly to 16S rRNA central domain where it helps coordinate assembly of the platform of the 30S subunit. The polypeptide is Small ribosomal subunit protein uS8 (Bartonella bacilliformis (strain ATCC 35685 / KC583 / Herrer 020/F12,63)).